A 227-amino-acid chain; its full sequence is Cytochrome c oxidase subunit 2 (227 aa).

The Mitochondrial intermembrane segment spans residues 1–14; the sequence is MAYPFQLGFQDASS. Residues 15–45 traverse the membrane as a helical segment; sequence PIMEELLHFHDHTLMIVFLISSLVLYIISLM. At 46–59 the chain is on the mitochondrial matrix side; that stretch reads LTTKLTHTSTMDAQ. Residues 60–87 form a helical membrane-spanning segment; it reads EVETIWTILPAIILILIALPSLRILYMM. The Mitochondrial intermembrane segment spans residues 88–227; the sequence is DEINNPSLTV…HFENWSLSMI (140 aa). 6 residues coordinate Cu cation: H161, C196, E198, C200, H204, and M207. E198 is a binding site for Mg(2+).

This sequence belongs to the cytochrome c oxidase subunit 2 family. As to quaternary structure, component of the cytochrome c oxidase (complex IV, CIV), a multisubunit enzyme composed of 14 subunits. The complex is composed of a catalytic core of 3 subunits MT-CO1, MT-CO2 and MT-CO3, encoded in the mitochondrial DNA, and 11 supernumerary subunits COX4I, COX5A, COX5B, COX6A, COX6B, COX6C, COX7A, COX7B, COX7C, COX8 and NDUFA4, which are encoded in the nuclear genome. The complex exists as a monomer or a dimer and forms supercomplexes (SCs) in the inner mitochondrial membrane with NADH-ubiquinone oxidoreductase (complex I, CI) and ubiquinol-cytochrome c oxidoreductase (cytochrome b-c1 complex, complex III, CIII), resulting in different assemblies (supercomplex SCI(1)III(2)IV(1) and megacomplex MCI(2)III(2)IV(2)). Found in a complex with TMEM177, COA6, COX18, COX20, SCO1 and SCO2. Interacts with TMEM177 in a COX20-dependent manner. Interacts with COX20. Interacts with COX16. Cu cation serves as cofactor.

The protein localises to the mitochondrion inner membrane. It catalyses the reaction 4 Fe(II)-[cytochrome c] + O2 + 8 H(+)(in) = 4 Fe(III)-[cytochrome c] + 2 H2O + 4 H(+)(out). Its function is as follows. Component of the cytochrome c oxidase, the last enzyme in the mitochondrial electron transport chain which drives oxidative phosphorylation. The respiratory chain contains 3 multisubunit complexes succinate dehydrogenase (complex II, CII), ubiquinol-cytochrome c oxidoreductase (cytochrome b-c1 complex, complex III, CIII) and cytochrome c oxidase (complex IV, CIV), that cooperate to transfer electrons derived from NADH and succinate to molecular oxygen, creating an electrochemical gradient over the inner membrane that drives transmembrane transport and the ATP synthase. Cytochrome c oxidase is the component of the respiratory chain that catalyzes the reduction of oxygen to water. Electrons originating from reduced cytochrome c in the intermembrane space (IMS) are transferred via the dinuclear copper A center (CU(A)) of subunit 2 and heme A of subunit 1 to the active site in subunit 1, a binuclear center (BNC) formed by heme A3 and copper B (CU(B)). The BNC reduces molecular oxygen to 2 water molecules using 4 electrons from cytochrome c in the IMS and 4 protons from the mitochondrial matrix. The sequence is that of Cytochrome c oxidase subunit 2 (MT-CO2) from Oryctolagus cuniculus (Rabbit).